Here is an 89-residue protein sequence, read N- to C-terminus: Small ribosomal subunit protein uS15 (89 aa).

It belongs to the universal ribosomal protein uS15 family. Part of the 30S ribosomal subunit. Forms a bridge to the 50S subunit in the 70S ribosome, contacting the 23S rRNA.

In terms of biological role, one of the primary rRNA binding proteins, it binds directly to 16S rRNA where it helps nucleate assembly of the platform of the 30S subunit by binding and bridging several RNA helices of the 16S rRNA. Forms an intersubunit bridge (bridge B4) with the 23S rRNA of the 50S subunit in the ribosome. This Mycobacterium bovis (strain ATCC BAA-935 / AF2122/97) protein is Small ribosomal subunit protein uS15.